The following is a 181-amino-acid chain: Inner membrane-spanning protein YciB (181 aa).

The next 5 helical transmembrane spans lie at 10 to 30 (LVIFFAVYKFFDIYIASGALI), 50 to 70 (MHLITFVMVTVFGSLTLILHD), 72 to 92 (SFIKWKVTIVYALFAIALGVS), 118 to 138 (VTWYWVSFFVVCGLVNIYVAF), and 148 to 168 (FKVFGLTALTLINTVLTVVYL).

Belongs to the YciB family.

It is found in the cell inner membrane. Functionally, plays a role in cell envelope biogenesis, maintenance of cell envelope integrity and membrane homeostasis. In Shewanella pealeana (strain ATCC 700345 / ANG-SQ1), this protein is Inner membrane-spanning protein YciB.